We begin with the raw amino-acid sequence, 1227 residues long: DNA-directed RNA polymerase subunit beta (1227 aa).

The protein belongs to the RNA polymerase beta chain family. The RNAP catalytic core consists of 2 alpha, 1 beta, 1 beta' and 1 omega subunit. When a sigma factor is associated with the core the holoenzyme is formed, which can initiate transcription.

The enzyme catalyses RNA(n) + a ribonucleoside 5'-triphosphate = RNA(n+1) + diphosphate. In terms of biological role, DNA-dependent RNA polymerase catalyzes the transcription of DNA into RNA using the four ribonucleoside triphosphates as substrates. This Chloroflexus aurantiacus (strain ATCC 29366 / DSM 635 / J-10-fl) protein is DNA-directed RNA polymerase subunit beta.